Here is a 372-residue protein sequence, read N- to C-terminus: 4-hydroxy-3-methylbut-2-en-1-yl diphosphate synthase (flavodoxin) (372 aa).

[4Fe-4S] cluster is bound by residues C270, C273, C305, and E312.

The protein belongs to the IspG family. [4Fe-4S] cluster is required as a cofactor.

It catalyses the reaction (2E)-4-hydroxy-3-methylbut-2-enyl diphosphate + oxidized [flavodoxin] + H2O + 2 H(+) = 2-C-methyl-D-erythritol 2,4-cyclic diphosphate + reduced [flavodoxin]. The protein operates within isoprenoid biosynthesis; isopentenyl diphosphate biosynthesis via DXP pathway; isopentenyl diphosphate from 1-deoxy-D-xylulose 5-phosphate: step 5/6. Converts 2C-methyl-D-erythritol 2,4-cyclodiphosphate (ME-2,4cPP) into 1-hydroxy-2-methyl-2-(E)-butenyl 4-diphosphate. The sequence is that of 4-hydroxy-3-methylbut-2-en-1-yl diphosphate synthase (flavodoxin) from Escherichia coli O9:H4 (strain HS).